We begin with the raw amino-acid sequence, 155 residues long: Endoribonuclease YbeY (155 aa).

Zn(2+) is bound by residues H114, H118, and H124.

It belongs to the endoribonuclease YbeY family. The cofactor is Zn(2+).

The protein localises to the cytoplasm. Single strand-specific metallo-endoribonuclease involved in late-stage 70S ribosome quality control and in maturation of the 3' terminus of the 16S rRNA. The chain is Endoribonuclease YbeY from Tolumonas auensis (strain DSM 9187 / NBRC 110442 / TA 4).